The chain runs to 133 residues: Nucleoid-associated protein Mb3743c (133 aa).

Positions 98–133 are disordered; the sequence is GAMRPPAPPAAPPGAPGMPGMPGMPGAPGAPPVPGI. Over residues 102–113 the composition is skewed to pro residues; the sequence is PPAPPAAPPGAP.

The protein belongs to the YbaB/EbfC family. As to quaternary structure, homodimer.

It localises to the cytoplasm. It is found in the nucleoid. In terms of biological role, binds to DNA and alters its conformation. May be involved in regulation of gene expression, nucleoid organization and DNA protection. The chain is Nucleoid-associated protein Mb3743c from Mycobacterium bovis (strain ATCC BAA-935 / AF2122/97).